The primary structure comprises 772 residues: Probable beta-glucosidase M (772 aa).

Positions 1-20 are cleaved as a signal peptide; the sequence is MLTSWGKTGFVLALALGGRA. N-linked (GlcNAc...) asparagine glycosylation occurs at asparagine 259. Residue aspartate 287 is part of the active site. N-linked (GlcNAc...) asparagine glycosylation is found at asparagine 315, asparagine 322, asparagine 438, asparagine 523, asparagine 547, asparagine 574, and asparagine 586.

This sequence belongs to the glycosyl hydrolase 3 family.

It is found in the secreted. The catalysed reaction is Hydrolysis of terminal, non-reducing beta-D-glucosyl residues with release of beta-D-glucose.. It functions in the pathway glycan metabolism; cellulose degradation. Beta-glucosidases are one of a number of cellulolytic enzymes involved in the degradation of cellulosic biomass. Catalyzes the last step releasing glucose from the inhibitory cellobiose. The polypeptide is Probable beta-glucosidase M (bglM) (Emericella nidulans (strain FGSC A4 / ATCC 38163 / CBS 112.46 / NRRL 194 / M139) (Aspergillus nidulans)).